The chain runs to 228 residues: NAD(P)H-quinone oxidoreductase subunit K, chloroplastic (228 aa).

[4Fe-4S] cluster-binding residues include C43, C44, C108, and C139.

Belongs to the complex I 20 kDa subunit family. NDH is composed of at least 16 different subunits, 5 of which are encoded in the nucleus. The cofactor is [4Fe-4S] cluster.

It is found in the plastid. The protein localises to the chloroplast thylakoid membrane. It carries out the reaction a plastoquinone + NADH + (n+1) H(+)(in) = a plastoquinol + NAD(+) + n H(+)(out). The catalysed reaction is a plastoquinone + NADPH + (n+1) H(+)(in) = a plastoquinol + NADP(+) + n H(+)(out). Functionally, NDH shuttles electrons from NAD(P)H:plastoquinone, via FMN and iron-sulfur (Fe-S) centers, to quinones in the photosynthetic chain and possibly in a chloroplast respiratory chain. The immediate electron acceptor for the enzyme in this species is believed to be plastoquinone. Couples the redox reaction to proton translocation, and thus conserves the redox energy in a proton gradient. The protein is NAD(P)H-quinone oxidoreductase subunit K, chloroplastic of Ceratophyllum demersum (Rigid hornwort).